The following is a 1311-amino-acid chain: Protein PARALOG OF AIPP2 (1311 aa).

Disordered regions lie at residues 1-21 (MADR…KVES), 114-141 (ISDD…VSAS), and 178-280 (GNKD…EMVE). Residues 213–240 (NHDDRVSSEKGNFKEKSRPGGNKERQEP) are compositionally biased toward basic and acidic residues. The segment covering 258–270 (SKSSSSNSSAVSE) has biased composition (low complexity). A PHD-type zinc finger spans residues 283–334 (VKVCDICGDAGREDLLAICSGCSDGAEHTYCMREMLDEVPEGDWLCEECAEE). Zn(2+) is bound by residues C286, C289, C301, C304, H310, C313, C328, and C331. A coiled-coil region spans residues 328 to 348 (CEECAEEAEKQKQEAKRKRET). 8 disordered regions span residues 369–390 (PDAK…ILPR), 411–440 (NHQT…FLKS), 460–701 (HPRQ…EDLN), 975–1050 (TNPQ…PSKK), 1059–1078 (EAGV…GDSL), 1087–1138 (EQEL…NPAN), 1152–1186 (NDGL…GIMK), and 1249–1311 (LSRS…DLPR). A compositionally biased stretch (polar residues) spans 411-431 (NHQTSFSDDTESARSAGSQLQ). Over residues 460-472 (HPRQKTGKEDTAL) the composition is skewed to basic and acidic residues. A compositionally biased stretch (polar residues) spans 487 to 502 (PSRTTDAGNSGGSDSQ). The segment covering 512–528 (HSQEGKSLKQVKDRNRE) has biased composition (basic and acidic residues). Residues 529–552 (ANASASSIDQKLKSRGNSSVSHAN) are compositionally biased toward polar residues. The span at 553–566 (NNRDLKGLQSDGKR) shows a compositional bias: basic and acidic residues. The span at 569-607 (LTKQVSNLSRNRLENSVVSGGDISTNEKCSASEQSSSQA) shows a compositional bias: polar residues. The segment covering 640–653 (VPREVGKKSKEAFS) has biased composition (basic and acidic residues). Polar residues-rich tracts occupy residues 668-694 (PSSQ…STTK), 977-988 (PQKNTSLPTSNV), and 1014-1025 (LRESSSNGIETR). Residues 1026-1050 (NGTDARSHENPNNRESSIERSPSKK) show a composition bias toward basic and acidic residues. Residues 1087-1096 (EQELGGRKDL) show a composition bias toward basic and acidic residues. A compositionally biased stretch (polar residues) spans 1250–1263 (SRSSNSGEQSNNSM). Residues 1256–1276 (GEQSNNSMNKEKQKADEEEED) adopt a coiled-coil conformation. Positions 1280–1289 (VAASLSLSLS) are enriched in low complexity.

In terms of assembly, part of the BAH-PHD bivalent histone reader complex that contains AIPP2, PAIPP2 and AIPP3/BDT1; the BAH-PHD module associates with CPL2 to form the BAH-PHD-CPL2 complex (BPC) for transcriptional repression. Binds directly to AIPP3/BDT1 and CPL2, but not to AIPP2. Expressed ubiquitously.

Together with AIPP2 and AIPP3/BDT1, cooperates to form a BAH-PHD bivalent histone reader complex able to read histone H3 lysine 27 trimethylation (H3K27me3) and low-methylated H3K4 histone marks in order to regulate transcription, especially to prevent early flowering; promotes AIPP3/BDT1 binding to H3K27me3. CPL2 is subsequently recruited to form a BAH-PHD-CPL2 complex (BPC) in order to silence several H3K27me3 and low-methylated H3K4 enriched loci, including AGO5, via the phosphorylation state-dependent inhibition of Pol II release from the transcriptional start site (e.g. Ser5P-Pol II dephosphorylation). The BPC complex represses flowering by inhibiting the expression of several genes, including AGL6, FT, FUL and SOC1. This Arabidopsis thaliana (Mouse-ear cress) protein is Protein PARALOG OF AIPP2.